The chain runs to 262 residues: Tryptophan synthase alpha chain (262 aa).

Catalysis depends on proton acceptor residues glutamate 49 and aspartate 60.

It belongs to the TrpA family. In terms of assembly, tetramer of two alpha and two beta chains.

The enzyme catalyses (1S,2R)-1-C-(indol-3-yl)glycerol 3-phosphate + L-serine = D-glyceraldehyde 3-phosphate + L-tryptophan + H2O. The protein operates within amino-acid biosynthesis; L-tryptophan biosynthesis; L-tryptophan from chorismate: step 5/5. In terms of biological role, the alpha subunit is responsible for the aldol cleavage of indoleglycerol phosphate to indole and glyceraldehyde 3-phosphate. The protein is Tryptophan synthase alpha chain of Thermoanaerobacter sp. (strain X514).